We begin with the raw amino-acid sequence, 101 residues long: Small ribosomal subunit protein uS10 (101 aa).

It belongs to the universal ribosomal protein uS10 family. Part of the 30S ribosomal subunit.

Its function is as follows. Involved in the binding of tRNA to the ribosomes. The chain is Small ribosomal subunit protein uS10 from Rhodococcus erythropolis (strain PR4 / NBRC 100887).